The chain runs to 308 residues: UDP-N-acetylenolpyruvoylglucosamine reductase (308 aa).

In terms of domain architecture, FAD-binding PCMH-type spans arginine 22–glycine 185. Arginine 165 is an active-site residue. Basic and acidic residues predominate over residues glutamine 197–serine 211. Positions glutamine 197–alanine 228 are disordered. The span at alanine 212–glycine 226 shows a compositional bias: polar residues. Serine 214 functions as the Proton donor in the catalytic mechanism. The active site involves glutamate 296.

This sequence belongs to the MurB family. Requires FAD as cofactor.

It is found in the cytoplasm. The catalysed reaction is UDP-N-acetyl-alpha-D-muramate + NADP(+) = UDP-N-acetyl-3-O-(1-carboxyvinyl)-alpha-D-glucosamine + NADPH + H(+). It participates in cell wall biogenesis; peptidoglycan biosynthesis. Functionally, cell wall formation. The sequence is that of UDP-N-acetylenolpyruvoylglucosamine reductase from Cereibacter sphaeroides (strain ATCC 17025 / ATH 2.4.3) (Rhodobacter sphaeroides).